The primary structure comprises 394 residues: MASVTVEQIRKAQRAEGPATILAIGTAVPANCFNQADFPDYYFRVTKSEHMTDLKKKFQRMCEKSTIKKRYLHLTEEHLKQNPHLCEYNAPSLNTRQDMLVVEVPKLGKEAAINAIKEWGQPKSKITHLIFCTGSSIDMPGADYQCAKLLGLRPSVKRVMLYQLGCYAGGKVLRIAKDIAENNKGARVLIVCSEITACIFRGPSEKHLDCLVGQSLFGDGASSVIVGADPDASVGERPIFELVSAAQTILPNSDGAIAGHVTEAGLTFHLLRDVPGLISQNIEKSLIEAFTPIGINDWNNIFWIAHPGGPAILDEIEAKLELKKEKMKASREMLSEYGNMSCASVFFIVDEMRKQSSKEGKSTTGDGLEWGALFGFGPGLTVETVVLHSVPTNV.

C166 is an active-site residue.

Belongs to the thiolase-like superfamily. Chalcone/stilbene synthases family. Homodimer. As to expression, expressed in lupulin gland. Present at low levels in leaves but accumulates in cones.

It carries out the reaction 3-methylbutanoyl-CoA + 3 malonyl-CoA + 3 H(+) = phlorisovalerophenone + 3 CO2 + 4 CoA. It catalyses the reaction (E)-4-coumaroyl-CoA + 3 malonyl-CoA + 3 H(+) = 2',4,4',6'-tetrahydroxychalcone + 3 CO2 + 4 CoA. The enzyme catalyses 2-methylpropanoyl-CoA + 3 malonyl-CoA + 3 H(+) = phlorisobutanophenone + 3 CO2 + 4 CoA. It functions in the pathway secondary metabolite biosynthesis. Involved in the biosynthesis of prenylated phenolics natural products which contribute to the bitter taste of beer and display broad biological activities. Polyketide synthase that can use 3-methylbutanoyl-CoA (isovaleryl-CoA) and 2-methylpropanoyl-CoA (isobutyryl-CoA) as substrates to produce phlorisovalerophenone (PIVP) and phlorisobutyrophenone (2-methyl-1-(2,4,6-trihydroxyphenyl)propan-1-one), respectively, intermediates in the biosynthesis of the bitter acids (alpha and beta) acids. Can also produce naringenin-chalcone (2',4,4',6'-tetrahydroxychalcone) from 4-coumaroyl-CoA with a lower efficiency. This is Phloroisovalerophenone synthase from Humulus lupulus (European hop).